We begin with the raw amino-acid sequence, 395 residues long: Flap endonuclease 1 (395 aa).

The interval 1-108 (MGILGLSKLL…DELETRRQKA (108 aa)) is N-domain. Residue Asp34 coordinates Mg(2+). DNA is bound at residue Arg74. The Mg(2+) site is built by Asp90, Glu162, Glu164, Asp183, and Asp185. An I-domain region spans residues 126-257 (MMEKMSKRTV…QRAWEGIQRY (132 aa)). Residue Glu162 participates in DNA binding. Residues Gly235 and Asp237 each contribute to the DNA site. Asp237 contributes to the Mg(2+) binding site. An interaction with PCNA region spans residues 340 to 348 (TQGRLDNFF).

Belongs to the XPG/RAD2 endonuclease family. FEN1 subfamily. In terms of assembly, interacts with PCNA. Three molecules of FEN1 bind to one PCNA trimer with each molecule binding to one PCNA monomer. PCNA stimulates the nuclease activity without altering cleavage specificity. Requires Mg(2+) as cofactor. In terms of processing, phosphorylated. Phosphorylation upon DNA damage induces relocalization to the nuclear plasma.

The protein resides in the nucleus. The protein localises to the nucleolus. It is found in the nucleoplasm. Its subcellular location is the mitochondrion. In terms of biological role, structure-specific nuclease with 5'-flap endonuclease and 5'-3' exonuclease activities involved in DNA replication and repair. During DNA replication, cleaves the 5'-overhanging flap structure that is generated by displacement synthesis when DNA polymerase encounters the 5'-end of a downstream Okazaki fragment. It enters the flap from the 5'-end and then tracks to cleave the flap base, leaving a nick for ligation. Also involved in the long patch base excision repair (LP-BER) pathway, by cleaving within the apurinic/apyrimidinic (AP) site-terminated flap. Acts as a genome stabilization factor that prevents flaps from equilibrating into structures that lead to duplications and deletions. Also possesses 5'-3' exonuclease activity on nicked or gapped double-stranded DNA, and exhibits RNase H activity. Also involved in replication and repair of rDNA and in repairing mitochondrial DNA. In Leishmania braziliensis, this protein is Flap endonuclease 1.